Reading from the N-terminus, the 166-residue chain is UPF0251 protein UNCMA_27150 (166 aa).

It belongs to the UPF0251 family.

This Methanocella arvoryzae (strain DSM 22066 / NBRC 105507 / MRE50) protein is UPF0251 protein UNCMA_27150.